The sequence spans 370 residues: 3-isopropylmalate dehydrogenase (370 aa).

Residue 77-90 coordinates NAD(+); sequence GPKWDSVPYEVRPE. 4 residues coordinate substrate: Arg-97, Arg-107, Arg-135, and Asp-226. Positions 226, 250, and 254 each coordinate Mg(2+). 290–302 is an NAD(+) binding site; sequence GSAPDIAGKGIAN.

It belongs to the isocitrate and isopropylmalate dehydrogenases family. LeuB type 1 subfamily. In terms of assembly, homodimer. It depends on Mg(2+) as a cofactor. Mn(2+) is required as a cofactor.

It localises to the cytoplasm. The catalysed reaction is (2R,3S)-3-isopropylmalate + NAD(+) = 4-methyl-2-oxopentanoate + CO2 + NADH. The protein operates within amino-acid biosynthesis; L-leucine biosynthesis; L-leucine from 3-methyl-2-oxobutanoate: step 3/4. Its function is as follows. Catalyzes the oxidation of 3-carboxy-2-hydroxy-4-methylpentanoate (3-isopropylmalate) to 3-carboxy-4-methyl-2-oxopentanoate. The product decarboxylates to 4-methyl-2 oxopentanoate. This Brucella suis biovar 1 (strain 1330) protein is 3-isopropylmalate dehydrogenase.